The sequence spans 130 residues: ATP synthase epsilon chain (130 aa).

The protein belongs to the ATPase epsilon chain family. In terms of assembly, F-type ATPases have 2 components, CF(1) - the catalytic core - and CF(0) - the membrane proton channel. CF(1) has five subunits: alpha(3), beta(3), gamma(1), delta(1), epsilon(1). CF(0) has three main subunits: a, b and c.

It localises to the cell membrane. Produces ATP from ADP in the presence of a proton gradient across the membrane. This chain is ATP synthase epsilon chain (atpC), found in Mycoplasmoides gallisepticum (strain R(low / passage 15 / clone 2)) (Mycoplasma gallisepticum).